A 465-amino-acid polypeptide reads, in one-letter code: Biotin biosynthesis bifunctional protein BioCD (465 aa).

The tract at residues 1–254 (MTPFLPDRSI…AYGQWRKPRG (254 aa)) is malonyl-ACP O-methyltransferase. ATP contacts are provided by residues aspartate 234 and 263-268 (GVGKTL). The interval 255 to 465 (VFVTGTDTGV…DSLLSSNASR (211 aa)) is DTB synthetase. Residue threonine 267 participates in Mg(2+) binding. Residue lysine 283 is part of the active site. Substrate is bound at residue threonine 287. ATP-binding positions include aspartate 295, 351–354 (EGAG), and 435–437 (PQL). Positions 295 and 351 each coordinate Mg(2+).

The protein in the N-terminal section; belongs to the methyltransferase superfamily. This sequence in the C-terminal section; belongs to the dethiobiotin synthetase family. Mg(2+) is required as a cofactor.

The protein resides in the cytoplasm. It catalyses the reaction (7R,8S)-7,8-diammoniononanoate + CO2 + ATP = (4R,5S)-dethiobiotin + ADP + phosphate + 3 H(+). It carries out the reaction malonyl-[ACP] + S-adenosyl-L-methionine = malonyl-[ACP] methyl ester + S-adenosyl-L-homocysteine. The protein operates within cofactor biosynthesis; biotin biosynthesis; biotin from 7,8-diaminononanoate: step 1/2. Its pathway is cofactor biosynthesis; biotin biosynthesis. In terms of biological role, converts the free carboxyl group of a malonyl-thioester to its methyl ester by transfer of a methyl group from S-adenosyl-L-methionine (SAM). It allows synthesis of pimeloyl-ACP via the fatty acid synthetic pathway. Its function is as follows. Catalyzes a mechanistically unusual reaction, the ATP-dependent insertion of CO2 between the N7 and N8 nitrogen atoms of 7,8-diaminopelargonic acid (DAPA, also called 7,8-diammoniononanoate) to form a ureido ring. The chain is Biotin biosynthesis bifunctional protein BioCD from Bordetella avium (strain 197N).